The primary structure comprises 144 residues: Putative golgin subfamily A member 2B (144 aa).

Disordered stretches follow at residues 1 to 20 (MDSE…PEDL) and 95 to 132 (SCGR…EAAG). A compositionally biased stretch (gly residues) spans 110–131 (AEGGGVHQQAGPGQGRGEGEAA).

It belongs to the GOLGA2 family.

This chain is Putative golgin subfamily A member 2B (GOLGA2P5), found in Homo sapiens (Human).